The following is a 721-amino-acid chain: bZIP transcription factor 17 (721 aa).

Disordered regions lie at residues 1–51 (MAEP…LMSD) and 87–232 (QEQF…EKKR). Over 1–366 (MAEPITKEQP…KSEAKTKKVA (366 aa)) the chain is Cytoplasmic. The span at 9-25 (QPPPPAPDPNSTYPPPS) shows a compositional bias: pro residues. A compositionally biased stretch (basic and acidic residues) spans 125-141 (ESPRDSDDRCSGADHNL). Positions 146–170 (PLSSQGSGNCGSDVSEATNESSPKS) are enriched in polar residues. The span at 204–216 (DESRNSKYRRSGE) shows a compositional bias: basic and acidic residues. A bZIP domain is found at 228–288 (DEKKRARLMR…AENATLRQQL (61 aa)). The interval 230-261 (KKRARLMRNRESAQLSRQRKKHYVEELEEKVR) is basic motif. Positions 267-274 (ITDLNGKI) are leucine-zipper. Residues 337 to 359 (PRLKPQNTLGTSKAKKSESKKSE) are disordered. A helical transmembrane segment spans residues 367 to 387 (SISFLGLLFCLFLFGALAPIV). Over 388–721 (NVNYGGISGA…RSGAPHLVTT (334 aa)) the chain is Lumenal. The segment covering 422 to 436 (TSRSGAGTGVSNSNG) has biased composition (polar residues). A disordered region spans residues 422-462 (TSRSGAGTGVSNSNGMHRGRDSDRGARKNISATESSVTPGN). Asn450, Asn462, Asn609, and Asn617 each carry an N-linked (GlcNAc...) asparagine glycan. The span at 451–462 (ISATESSVTPGN) shows a compositional bias: polar residues. An RRIL cleavage motif motif is present at residues 627 to 630 (RRIL). N-linked (GlcNAc...) asparagine glycosylation is found at Asn643 and Asn651.

This sequence belongs to the bZIP family. In terms of assembly, interacts with BZIP28.

The protein localises to the endoplasmic reticulum membrane. Its subcellular location is the golgi apparatus membrane. The protein resides in the nucleus. In terms of biological role, transcriptional activator involved in salt and osmotic stress responses. Functions as a stress sensor and transducer in a signaling pathway that resembles an ER stress response. Following salt stress, BZIP17 is cleaved by SBT6.1 (S1P) and S2P at the C-terminus and the N-terminal bZIP component is translocated to the nucleus, where it activates the expression of salt stress response genes. Functions as a stress sensor and transducer in ER stress signaling pathway. ER stress induces proteolysis of BZIP17 by SBT6.1 (S1P) and S2P, and the N-terminal bZIP component is translocated to the nucleus, where it activates the expression and production of ER chaperones, as well as protein involved in brassinosteroid (BR) signaling, which is required for stress acclimation and growth. This Arabidopsis thaliana (Mouse-ear cress) protein is bZIP transcription factor 17.